Consider the following 238-residue polypeptide: DNA repair protein RecO (238 aa).

It belongs to the RecO family.

In terms of biological role, involved in DNA repair and RecF pathway recombination. This chain is DNA repair protein RecO, found in Hahella chejuensis (strain KCTC 2396).